The following is a 525-amino-acid chain: Bifunctional purine biosynthesis protein PurH (525 aa).

Residues 1–145 (MSNVERALIS…KNNASVGIVT (145 aa)) form the MGS-like domain.

This sequence belongs to the PurH family.

The enzyme catalyses (6R)-10-formyltetrahydrofolate + 5-amino-1-(5-phospho-beta-D-ribosyl)imidazole-4-carboxamide = 5-formamido-1-(5-phospho-D-ribosyl)imidazole-4-carboxamide + (6S)-5,6,7,8-tetrahydrofolate. It carries out the reaction IMP + H2O = 5-formamido-1-(5-phospho-D-ribosyl)imidazole-4-carboxamide. It functions in the pathway purine metabolism; IMP biosynthesis via de novo pathway; 5-formamido-1-(5-phospho-D-ribosyl)imidazole-4-carboxamide from 5-amino-1-(5-phospho-D-ribosyl)imidazole-4-carboxamide (10-formyl THF route): step 1/1. The protein operates within purine metabolism; IMP biosynthesis via de novo pathway; IMP from 5-formamido-1-(5-phospho-D-ribosyl)imidazole-4-carboxamide: step 1/1. This chain is Bifunctional purine biosynthesis protein PurH, found in Alcanivorax borkumensis (strain ATCC 700651 / DSM 11573 / NCIMB 13689 / SK2).